The following is a 342-amino-acid chain: Flavanone 3-dioxygenase 2 (342 aa).

The Fe2OG dioxygenase domain maps to 193–293 (QEQHMAVNYY…RMSVASFLCP (101 aa)). Residues H217, D219, and H274 each coordinate Fe cation. Position 284 (R284) interacts with 2-oxoglutarate.

This sequence belongs to the iron/ascorbate-dependent oxidoreductase family. The cofactor is Fe(2+). It depends on L-ascorbate as a cofactor. In terms of tissue distribution, expressed in roots, leaves and stems. Expressed at low levels in seeds.

It carries out the reaction a (2S)-flavan-4-one + 2-oxoglutarate + O2 = a (2R,3R)-dihydroflavonol + succinate + CO2. Its pathway is secondary metabolite biosynthesis; flavonoid biosynthesis. Catalyzes the 3-beta-hydroxylation of 2S-flavanones to 2R,3R-dihydroflavonols which are intermediates in the biosynthesis of flavonols, anthocyanidins, catechins and proanthocyanidins in plants. Converts (2S)-eriodictyol to (+)-taxifolin and (2S)-naringenin to (+)-(2R/3R)-dihydrokaempferol in vitro. The sequence is that of Flavanone 3-dioxygenase 2 from Oryza sativa subsp. japonica (Rice).